Reading from the N-terminus, the 45-residue chain is uncharacterized protein (45 aa).

This is an uncharacterized protein from Escherichia coli (Bacteriophage T4).